The sequence spans 200 residues: CASP-like protein 1D2 (200 aa).

A disordered region spans residues 1 to 26 (MASTENPDPETGKSEPIPASATTPPP). The Cytoplasmic segment spans residues 1-36 (MASTENPDPETGKSEPIPASATTPPPSAASFLDCRK). Residues 37–57 (IDVIIRVLLFSATLTALIVMV) form a helical membrane-spanning segment. Over 58–85 (TSDQTEKTQLPGVSSPAPVSAEFNDSPA) the chain is Extracellular. Residues 86 to 106 (FIFFVVALVVTSFYALMSTLV) form a helical membrane-spanning segment. The Cytoplasmic segment spans residues 107 to 129 (SISLLLKPEFTARVSVYLASLDM). The chain crosses the membrane as a helical span at residues 130-150 (VMLGILASATGTAGGVAYIAL). Residues 151 to 171 (KGNKEVGWNKICNVYDKFCRY) are Extracellular-facing. A helical transmembrane segment spans residues 172 to 192 (IATSLALSLFATLLLLVLSIC). Topologically, residues 193–200 (SALSKRTP) are cytoplasmic.

It belongs to the Casparian strip membrane proteins (CASP) family. Homodimer and heterodimers.

It localises to the cell membrane. The sequence is that of CASP-like protein 1D2 from Arabidopsis lyrata subsp. lyrata (Lyre-leaved rock-cress).